Reading from the N-terminus, the 626-residue chain is Phosphomethylpyrimidine synthase (626 aa).

The tract at residues 1–22 is disordered; sequence MTKQEKAINLSESAQVDQQSVQ. Residues 10-22 are compositionally biased toward polar residues; that stretch reads LSESAQVDQQSVQ. Residues asparagine 232, methionine 261, tyrosine 290, histidine 326, 346–348, 387–390, and glutamate 426 contribute to the substrate site; these read SRG and DGLR. Histidine 430 serves as a coordination point for Zn(2+). Residue tyrosine 453 participates in substrate binding. Residue histidine 494 participates in Zn(2+) binding. The [4Fe-4S] cluster site is built by cysteine 574, cysteine 577, and cysteine 582.

Belongs to the ThiC family. As to quaternary structure, homodimer. [4Fe-4S] cluster serves as cofactor.

The catalysed reaction is 5-amino-1-(5-phospho-beta-D-ribosyl)imidazole + S-adenosyl-L-methionine = 4-amino-2-methyl-5-(phosphooxymethyl)pyrimidine + CO + 5'-deoxyadenosine + formate + L-methionine + 3 H(+). Its pathway is cofactor biosynthesis; thiamine diphosphate biosynthesis. Catalyzes the synthesis of the hydroxymethylpyrimidine phosphate (HMP-P) moiety of thiamine from aminoimidazole ribotide (AIR) in a radical S-adenosyl-L-methionine (SAM)-dependent reaction. This chain is Phosphomethylpyrimidine synthase, found in Pseudomonas putida (strain ATCC 47054 / DSM 6125 / CFBP 8728 / NCIMB 11950 / KT2440).